The sequence spans 386 residues: MHLHEYQAKDLLTAYQLPIPPYHVATSVPEVETAIQAEQWKAGVVKAQVHAGGRGKNGGVVIAHSPEDLLAAADKLLHMQFSSNQTAGLSLPINKVLISPLVEIASEYYLAIVIDRKHRCPVIMLSKAGGVDIEEVAEKQPDQLLKMTLPSSGKIYGYQLRRIAKFMEWDQPIADQGNRIIRQLLQCFYEKDASLLEINPLVLTKDGSLVILDAKMTIDDNALYRHPQLADCYDPSQENIRDVLAKQLGLSYIALDGTIGCLVNGAGLAMSTLDILKLYGGSAANFLDVGGSASEKQIQEAISLVLSDKSVRVLFIHIFGGIMDCAVVASGLVSAMQGQKETIPTVIRLEGTNVDKGKDMIINAGIPCEFVTSMSEGAELAVQLSR.

Residues 9 to 244 (KDLLTAYQLP…PSQENIRDVL (236 aa)) form the ATP-grasp domain. ATP-binding positions include lysine 46, 53-55 (GRG), valine 102, and glutamate 107. Asparagine 199 and aspartate 213 together coordinate Mg(2+). Residues asparagine 264 and 321–323 (GIM) contribute to the substrate site.

This sequence belongs to the succinate/malate CoA ligase beta subunit family. Heterotetramer of two alpha and two beta subunits. The cofactor is Mg(2+).

The catalysed reaction is succinate + ATP + CoA = succinyl-CoA + ADP + phosphate. It carries out the reaction GTP + succinate + CoA = succinyl-CoA + GDP + phosphate. It functions in the pathway carbohydrate metabolism; tricarboxylic acid cycle; succinate from succinyl-CoA (ligase route): step 1/1. Its function is as follows. Succinyl-CoA synthetase functions in the citric acid cycle (TCA), coupling the hydrolysis of succinyl-CoA to the synthesis of either ATP or GTP and thus represents the only step of substrate-level phosphorylation in the TCA. The beta subunit provides nucleotide specificity of the enzyme and binds the substrate succinate, while the binding sites for coenzyme A and phosphate are found in the alpha subunit. This Chlamydia trachomatis serovar A (strain ATCC VR-571B / DSM 19440 / HAR-13) protein is Succinate--CoA ligase [ADP-forming] subunit beta.